A 603-amino-acid polypeptide reads, in one-letter code: Keratin, type II cuticular Hb4 (603 aa).

The tract at residues 1-173 (MSCRSYRVSS…PNAQRVKRDE (173 aa)) is head. The IF rod domain occupies 173–484 (EKEQIKTLNN…RLLEGEEIRI (312 aa)). The tract at residues 174–208 (KEQIKTLNNKFASFIDKVRFLEQQNKLLETKWSFL) is coil 1A. The interval 209–218 (QEQKCARSNL) is linker 1. A coil 1B region spans residues 219-319 (EPLFDNYITN…YHEEIEMLQS (101 aa)). Positions 320–336 (HISETSVIVKMDNSRDL) are linker 12. A coil 2 region spans residues 337–480 (NLDGIIAEVK…VTYRRLLEGE (144 aa)). The tail stretch occupies residues 481–603 (EIRICEGVGP…STTTSRRTRY (123 aa)). Residues 579 to 603 (CSGGRGNRSSSVRFSSTTTSRRTRY) form a disordered region.

It belongs to the intermediate filament family. As to quaternary structure, heterotetramer of two type I and two type II keratins. In terms of tissue distribution, in skin, only expressed in the suprabasal cells of tail scale epidermis. Suprabasally expressed in stratified squamous epithelia and also in the posterior unit of the complex filiform papillae of tongue. Expressed in rare anatomical sites in which an orthokeratinized stratum corneum would be too soft and a hard keratinized structure would be too rigid to meet the functional requirement of the respective epithelia.

This Mus musculus (Mouse) protein is Keratin, type II cuticular Hb4 (Krt84).